The primary structure comprises 380 residues: Glucose-1-phosphate adenylyltransferase (380 aa).

Alpha-D-glucose 1-phosphate contacts are provided by residues glycine 164, 179–180 (EK), and serine 190.

It belongs to the bacterial/plant glucose-1-phosphate adenylyltransferase family. Homotetramer.

The enzyme catalyses alpha-D-glucose 1-phosphate + ATP + H(+) = ADP-alpha-D-glucose + diphosphate. It participates in glycan biosynthesis; glycogen biosynthesis. Its function is as follows. Involved in the biosynthesis of ADP-glucose, a building block required for the elongation reactions to produce glycogen. Catalyzes the reaction between ATP and alpha-D-glucose 1-phosphate (G1P) to produce pyrophosphate and ADP-Glc. The chain is Glucose-1-phosphate adenylyltransferase from Streptococcus pneumoniae (strain CGSP14).